A 210-amino-acid polypeptide reads, in one-letter code: MTNRTLSREEIRKLDRDLRILVATNGTLTRVLNVVANEEIVVDIINQQLLDVAPKIPELENLKIGRILQRDILLKGQKSGILFVAAESLIVIDLLPTAITTYLTKTHHPIGEIMAASRIETYKEDAQVWIGDLPCWLADYGYWDLPKRAVGRRYRIIAGGQPVIITTEYFLRSVFQDTPREELDRCQYSNDIDTRSGDRFVLHGRVFKNL.

This sequence belongs to the chorismate pyruvate-lyase type 2 family.

It carries out the reaction chorismate = 4-hydroxybenzoate + pyruvate. Functionally, removes the pyruvyl group from chorismate to provide 4-hydroxybenzoate (4HB). Involved in the synthesis of glycosylated p-hydroxybenzoic acid methyl esters (p-HBADs) and phenolic glycolipids (PGL) that play important roles in the pathogenesis of mycobacterial infections. The chain is Chorismate pyruvate-lyase from Mycobacterium leprae (strain TN).